Here is a 303-residue protein sequence, read N- to C-terminus: Mevalonate kinase (303 aa).

90 to 100 (PAGSGLGSSAA) contributes to the ATP binding site. D141 (proton acceptor) is an active-site residue.

Belongs to the GHMP kinase family. Mevalonate kinase subfamily. As to quaternary structure, homodimer. Mg(2+) is required as a cofactor.

The protein localises to the cytoplasm. The enzyme catalyses (R)-mevalonate + ATP = (R)-5-phosphomevalonate + ADP + H(+). It functions in the pathway isoprenoid biosynthesis; isopentenyl diphosphate biosynthesis via mevalonate pathway; isopentenyl diphosphate from (R)-mevalonate: step 1/3. Catalyzes the phosphorylation of (R)-mevalonate (MVA) to (R)-mevalonate 5-phosphate (MVAP). Functions in the mevalonate (MVA) pathway leading to isopentenyl diphosphate (IPP), a key precursor for the biosynthesis of isoprenoid compounds such as archaeal membrane lipids. The sequence is that of Mevalonate kinase from Methanothermobacter thermautotrophicus (strain ATCC 29096 / DSM 1053 / JCM 10044 / NBRC 100330 / Delta H) (Methanobacterium thermoautotrophicum).